Consider the following 320-residue polypeptide: tRNA dimethylallyltransferase (320 aa).

Position 5 to 12 (5 to 12 (GPTAVGKS)) interacts with ATP. 7-12 (TAVGKS) is a binding site for substrate. The tract at residues 30–33 (DSMQ) is interaction with substrate tRNA.

This sequence belongs to the IPP transferase family. Monomer. Mg(2+) is required as a cofactor.

The enzyme catalyses adenosine(37) in tRNA + dimethylallyl diphosphate = N(6)-dimethylallyladenosine(37) in tRNA + diphosphate. In terms of biological role, catalyzes the transfer of a dimethylallyl group onto the adenine at position 37 in tRNAs that read codons beginning with uridine, leading to the formation of N6-(dimethylallyl)adenosine (i(6)A). The sequence is that of tRNA dimethylallyltransferase from Heliobacterium modesticaldum (strain ATCC 51547 / Ice1).